The primary structure comprises 2280 residues: Genome polyprotein (2280 aa).

In terms of domain architecture, SF3 helicase spans 454-608; sequence ETQANNIRST…EEWKKRNPGK (155 aa). 480-487 contributes to the ATP binding site; it reads GAPGIGKT. Position 965 is an O-(5'-phospho-RNA)-tyrosine (tyrosine 965). The region spanning 1054–1202 is the Peptidase C24 domain; the sequence is GPTAIVEFTQ…TKVAQRVVKE (149 aa). Active-site for 3CLpro activity residues include histidine 1084, glutamate 1105, and cysteine 1169. The region spanning 1442–1567 is the RdRp catalytic domain; sequence GVLYCLDYSK…SVCPATASIF (126 aa). The tract at residues 1722 to 1746 is disordered; it reads GNGSNPEPKQSNNPMVVDPPGTTGP. Positions 1723-1735 are enriched in polar residues; that stretch reads NGSNPEPKQSNNP.

Homodimer. Homomultimer. Post-translationally, specific enzymatic cleavages in vivo yield mature proteins. Pro-Pol is first autocatalytically cleaved, then processes the whole polyprotein. VPg is uridylylated by the polymerase and is covalently attached to the 5'-end of the polyadenylated genomic and subgenomic RNAs. This uridylylated form acts as a nucleotide-peptide primer for the polymerase.

The protein localises to the virion. Its subcellular location is the host cytoplasm. The catalysed reaction is a ribonucleoside 5'-triphosphate + H2O = a ribonucleoside 5'-diphosphate + phosphate + H(+). It catalyses the reaction RNA(n) + a ribonucleoside 5'-triphosphate = RNA(n+1) + diphosphate. It carries out the reaction Endopeptidase with a preference for cleavage when the P1 position is occupied by Glu-|-Xaa and the P1' position is occupied by Gly-|-Yaa.. Functionally, together with NTPase and NS4, initiates the formation of the replication complex. Induces the proliferation of the host smooth ER membranes forming long tubular structures. These remodeled membranes probably form the viral factories that contain the replication complex. In terms of biological role, displays NTPase activity, but no helicase activity. Induces the formation of convoluted membranes derived from the host ER. These remodeled membranes probably form the viral factories that contain the replication complex. Together with NS2 and NS4, initiates the formation of the replication complex. Probable key protein responsible for the formation of membrane alterations by the virus. Induces the formation of convoluted membranes derived from the host ER. These remodeled membranes probably form the viral factories that contain the replication complex. Together with NS2 and NTPase, initiates the formation of the replication complex. Its function is as follows. Viral genome-linked protein is covalently linked to the 5'-end of the positive-strand, negative-strand genomic RNAs and subgenomic RNA. Acts as a genome-linked replication primer. May recruit ribosome to viral RNA thereby promoting viral proteins translation. Interacts with host translation initiation complex to allow the translation of viral proteins. Functionally, protease-polymerase p76 processes the polyprotein: Pro-Pol is first released by autocleavage, then all other proteins are cleaved. Cleaves host translation initiation factor eIF4G1, eIF4G2 and PABP1 thereby inducing a shutdown of host protein synthesis. This shutdown may not prevent viral mRNA from being translated since viral Vpg replaces the cap. It is also an RNA-directed RNA polymerase which replicates genomic and antigenomic viral RNA by recognizing specific signals. Also transcribes a subgenomic mRNA by initiating RNA synthesis internally on antigenomic RNA. This sgRNA codes for structural proteins. Catalyzes the covalent attachment VPg with viral RNAs. In terms of biological role, capsid protein self assembles to form an icosahedral capsid with a T=3 symmetry, about 38 nm in diameter, and consisting of 180 capsid proteins. The capsid encapsulate the genomic RNA and VP2 proteins. Attaches virion to target cells, inducing endocytosis of the viral particle. Acidification of the endosome induces conformational change of capsid protein thereby injecting virus genomic RNA into host cytoplasm. The polypeptide is Genome polyprotein (Homo sapiens (Human)).